A 624-amino-acid polypeptide reads, in one-letter code: MSTDNKQSLPAITLAAIGVVYGDIGTSPLYTLRECLSGQFGFGVERDAVFGFLSLIFWLLIFVVSIKYLTFVIRADNAGEGGILTLMSLAGRNTSARTTSMLVIMGLIGGSFFYGEVVITPAISVMSAIEGLEIVAPQLDTWIVPLSIIVLTLLFMIQKHGTAMVGKLFAPIMLTWFLILAGLGLRSIIANPEVLHALNPMWAVHFFLEYKTVSFIALGAVVLSITGVEALYADMGHFGKFPIRLAWFTVVLPSLTLNYFGQGALLLKNPEAIKNPFFLLAPDWALIPLLIIAALATVIASQAVISGVFLLTRQAVRLGYLSPMRIIHTSEMESGQIYIPFVNWMLYVAVVIVIVIVSFEHSSNLAAAYGIAVTGTMVLTSILSTTVARQNWHWNKYFVALILIAFLCVDIPLFTANLDKLLSGGWLPLSLGTVMFIVMTTWKSERFRLLRRMHEHGNSLEAMIASLEKSPPVRVPGTEVYMSRAINVIPFALMHNLKHNKVLHERVILLTLRTEDAPYVHNVRRVQIEQLSPTFWRVVASYGWRETPNVEEVFHRCGLEGLSCRMMETSFFMSHESLILGKRPWYLRLRGKLYLLLQRNALRAPDQFEIPPNRVIELGTQVEI.

Helical transmembrane passes span 9–29 (LPAITLAAIGVVYGDIGTSPL), 49–69 (VFGFLSLIFWLLIFVVSIKYL), 103–123 (VIMGLIGGSFFYGEVVITPAI), 137–157 (PQLDTWIVPLSIIVLTLLFMI), 165–185 (VGKLFAPIMLTWFLILAGLGL), 213–233 (VSFIALGAVVLSITGVEALYA), 247–267 (WFTVVLPSLTLNYFGQGALLL), 276–296 (PFFLLAPDWALIPLLIIAALA), 337–357 (IYIPFVNWMLYVAVVIVIVIV), 365–385 (LAAAYGIAVTGTMVLTSILST), 398–418 (FVALILIAFLCVDIPLFTANL), and 421–441 (LLSGGWLPLSLGTVMFIVMTT).

It belongs to the HAK/KUP transporter (TC 2.A.72) family.

It localises to the cell inner membrane. The enzyme catalyses K(+)(in) + H(+)(in) = K(+)(out) + H(+)(out). Responsible for the low-affinity transport of potassium into the cell. Likely operates as a K(+):H(+) symporter. The protein is Low affinity potassium transport system protein Kup of Shigella dysenteriae serotype 1 (strain Sd197).